The sequence spans 324 residues: Beta-ketoacyl-[acyl-carrier-protein] synthase III (324 aa).

Residues cysteine 112 and histidine 249 contribute to the active site. The tract at residues 250 to 254 (QANRR) is ACP-binding. Residue asparagine 279 is part of the active site.

This sequence belongs to the thiolase-like superfamily. FabH family. Homodimer.

The protein resides in the cytoplasm. It carries out the reaction malonyl-[ACP] + acetyl-CoA + H(+) = 3-oxobutanoyl-[ACP] + CO2 + CoA. It functions in the pathway lipid metabolism; fatty acid biosynthesis. Catalyzes the condensation reaction of fatty acid synthesis by the addition to an acyl acceptor of two carbons from malonyl-ACP. Catalyzes the first condensation reaction which initiates fatty acid synthesis and may therefore play a role in governing the total rate of fatty acid production. Possesses both acetoacetyl-ACP synthase and acetyl transacylase activities. Its substrate specificity determines the biosynthesis of branched-chain and/or straight-chain of fatty acids. The sequence is that of Beta-ketoacyl-[acyl-carrier-protein] synthase III from Streptococcus pyogenes serotype M4 (strain MGAS10750).